A 433-amino-acid chain; its full sequence is D-amino acid dehydrogenase (433 aa).

3–17 (IVVLGAGVLGVTSAW) contributes to the FAD binding site.

The protein belongs to the DadA oxidoreductase family. FAD serves as cofactor.

The enzyme catalyses a D-alpha-amino acid + A + H2O = a 2-oxocarboxylate + AH2 + NH4(+). It participates in amino-acid degradation; D-alanine degradation; NH(3) and pyruvate from D-alanine: step 1/1. Oxidative deamination of D-amino acids. The polypeptide is D-amino acid dehydrogenase (Paracoccus denitrificans (strain Pd 1222)).